The primary structure comprises 138 residues: Basic phospholipase A2 DsM-b1/DsM-b1' (138 aa).

Residues 1-16 (MRTLWIVAMCLIGVEG) form the signal peptide. 7 disulfide bridges follow: C42/C131, C44/C60, C59/C111, C65/C138, C66/C104, C73/C97, and C91/C102. Ca(2+)-binding residues include Y43, G45, and G47. H63 is an active-site residue. A Ca(2+)-binding site is contributed by D64. D105 is a catalytic residue.

The cofactor is Ca(2+). In terms of tissue distribution, expressed by the venom gland.

It localises to the secreted. The enzyme catalyses a 1,2-diacyl-sn-glycero-3-phosphocholine + H2O = a 1-acyl-sn-glycero-3-phosphocholine + a fatty acid + H(+). In terms of biological role, exhibits high hydrolytic activities and shows strong preference for the anionic micelles (dPPC with deoxycholate) to the zwitterionic micelles (dPPC with Triton X-100). PLA2 catalyzes the calcium-dependent hydrolysis of the 2-acyl groups in 3-sn-phosphoglycerides. The polypeptide is Basic phospholipase A2 DsM-b1/DsM-b1' (Daboia siamensis (Eastern Russel's viper)).